We begin with the raw amino-acid sequence, 62 residues long: UPF0434 protein RHECIAT_CH0004260 (62 aa).

This sequence belongs to the UPF0434 family.

The chain is UPF0434 protein RHECIAT_CH0004260 from Rhizobium etli (strain CIAT 652).